We begin with the raw amino-acid sequence, 394 residues long: 1-deoxy-D-xylulose 5-phosphate reductoisomerase (394 aa).

NADPH contacts are provided by threonine 10, glycine 11, serine 12, isoleucine 13, glycine 38, arginine 39, asparagine 40, and asparagine 123. Lysine 124 contributes to the 1-deoxy-D-xylulose 5-phosphate binding site. NADPH is bound at residue glutamate 125. Position 149 (aspartate 149) interacts with Mn(2+). Residues serine 150, glutamate 151, serine 175, and histidine 198 each coordinate 1-deoxy-D-xylulose 5-phosphate. Glutamate 151 serves as a coordination point for Mn(2+). Glycine 204 provides a ligand contact to NADPH. Residues serine 211, asparagine 216, lysine 217, and glutamate 220 each coordinate 1-deoxy-D-xylulose 5-phosphate. Glutamate 220 serves as a coordination point for Mn(2+).

This sequence belongs to the DXR family. Mg(2+) is required as a cofactor. The cofactor is Mn(2+).

It catalyses the reaction 2-C-methyl-D-erythritol 4-phosphate + NADP(+) = 1-deoxy-D-xylulose 5-phosphate + NADPH + H(+). Its pathway is isoprenoid biosynthesis; isopentenyl diphosphate biosynthesis via DXP pathway; isopentenyl diphosphate from 1-deoxy-D-xylulose 5-phosphate: step 1/6. In terms of biological role, catalyzes the NADPH-dependent rearrangement and reduction of 1-deoxy-D-xylulose-5-phosphate (DXP) to 2-C-methyl-D-erythritol 4-phosphate (MEP). This chain is 1-deoxy-D-xylulose 5-phosphate reductoisomerase, found in Cereibacter sphaeroides (strain ATCC 17029 / ATH 2.4.9) (Rhodobacter sphaeroides).